A 358-amino-acid chain; its full sequence is Anhydro-N-acetylmuramic acid kinase (358 aa).

9 to 16 (GTSLDGVD) lines the ATP pocket.

It belongs to the anhydro-N-acetylmuramic acid kinase family.

It catalyses the reaction 1,6-anhydro-N-acetyl-beta-muramate + ATP + H2O = N-acetyl-D-muramate 6-phosphate + ADP + H(+). It functions in the pathway amino-sugar metabolism; 1,6-anhydro-N-acetylmuramate degradation. The protein operates within cell wall biogenesis; peptidoglycan recycling. Its function is as follows. Catalyzes the specific phosphorylation of 1,6-anhydro-N-acetylmuramic acid (anhMurNAc) with the simultaneous cleavage of the 1,6-anhydro ring, generating MurNAc-6-P. Is required for the utilization of anhMurNAc either imported from the medium or derived from its own cell wall murein, and thus plays a role in cell wall recycling. This Acidiphilium cryptum (strain JF-5) protein is Anhydro-N-acetylmuramic acid kinase.